The following is a 226-amino-acid chain: UPF0111 protein AF_1799 (226 aa).

Belongs to the UPF0111 family.

This Archaeoglobus fulgidus (strain ATCC 49558 / DSM 4304 / JCM 9628 / NBRC 100126 / VC-16) protein is UPF0111 protein AF_1799.